Consider the following 245-residue polypeptide: Ribosomal RNA small subunit methyltransferase G (245 aa).

Residues Gly80, Phe85, 103–105, 131–132, and Arg150 contribute to the S-adenosyl-L-methionine site; these read DAT and AE.

The protein belongs to the methyltransferase superfamily. RNA methyltransferase RsmG family.

It localises to the cytoplasm. Functionally, specifically methylates the N7 position of a guanine in 16S rRNA. The polypeptide is Ribosomal RNA small subunit methyltransferase G (Deinococcus geothermalis (strain DSM 11300 / CIP 105573 / AG-3a)).